We begin with the raw amino-acid sequence, 497 residues long: uncharacterized protein (497 aa).

11 helical membrane passes run 91–111 (WVGT…STLL), 119–139 (VTSA…LVHS), 149–169 (LLGI…AQWY), 179–199 (AFLV…SYGL), 215–235 (ILFI…FIHI), 283–303 (MYLY…LSNF), 319–339 (LLMN…FGLI), 347–367 (MDIA…IAFA), 374–394 (LAGY…LSCI), 406–426 (FMSA…PQTF), and 439–459 (VSFV…YAVN).

This sequence belongs to the major facilitator superfamily. Allantoate permease family.

It localises to the golgi apparatus. It is found in the membrane. This is an uncharacterized protein from Schizosaccharomyces pombe (strain 972 / ATCC 24843) (Fission yeast).